A 154-amino-acid polypeptide reads, in one-letter code: UPF0178 protein Glov_0658 (154 aa).

The protein belongs to the UPF0178 family.

This is UPF0178 protein Glov_0658 from Trichlorobacter lovleyi (strain ATCC BAA-1151 / DSM 17278 / SZ) (Geobacter lovleyi).